Consider the following 387-residue polypeptide: 3-ketoacyl-CoA thiolase (387 aa).

The active-site Acyl-thioester intermediate is the C91. Catalysis depends on proton acceptor residues H343 and C373.

Belongs to the thiolase-like superfamily. Thiolase family. As to quaternary structure, heterotetramer of two alpha chains (FadB) and two beta chains (FadA).

Its subcellular location is the cytoplasm. The catalysed reaction is an acyl-CoA + acetyl-CoA = a 3-oxoacyl-CoA + CoA. The protein operates within lipid metabolism; fatty acid beta-oxidation. In terms of biological role, catalyzes the final step of fatty acid oxidation in which acetyl-CoA is released and the CoA ester of a fatty acid two carbons shorter is formed. The protein is 3-ketoacyl-CoA thiolase of Escherichia coli (strain UTI89 / UPEC).